A 329-amino-acid polypeptide reads, in one-letter code: MKSMKIAVIPGDGIGVEVMEAALHILNTLDLDLEFIHADAGDACLKRTGTALPEETLEAVGEARATLFGAAGESAADVIVRLRREFDLFANLRPVKSLPGVPCLYPDLDFVIVRENTEDLYVGDEEYTPEGAVAKRIITRTASRRISQFAFQYAQKEGMQKVTAVHKANVLKKTDGIFRDEFYKVASEYPQMEATDYYVDATAMYLITQPQEFQTIVTTNLFGDILSDEAAGLIGGLGLAPSANIGEKNALFEPVHGSAPQIAGKNIANPTAMILTTTLMLKHLNKKQEAQKIEKALQKTLAEGLVTPDLGGKLGTMEMAAEIARHLED.

Substrate is bound by residues arginine 83, arginine 93, arginine 114, and aspartate 200. Mg(2+) is bound by residues aspartate 200, aspartate 224, and aspartate 228. An NAD(+)-binding site is contributed by 257–269 (GSAPQIAGKNIAN).

It belongs to the isocitrate and isopropylmalate dehydrogenases family. Homotetramer. The cofactor is Mg(2+). Mn(2+) is required as a cofactor.

The protein resides in the cytoplasm. It carries out the reaction (2R,3S)-3-isopropylmalate + NAD(+) = 4-methyl-2-oxopentanoate + CO2 + NADH. It participates in amino-acid biosynthesis; L-leucine biosynthesis; L-leucine from 3-methyl-2-oxobutanoate: step 3/4. In terms of biological role, catalyzes the oxidation of 3-carboxy-2-hydroxy-4-methylpentanoate (3-isopropylmalate) to 3-carboxy-4-methyl-2-oxopentanoate. The product decarboxylates to 4-methyl-2 oxopentanoate. The sequence is that of 3-isopropylmalate dehydrogenase (leuB) from Methanothermobacter thermautotrophicus (strain ATCC 29096 / DSM 1053 / JCM 10044 / NBRC 100330 / Delta H) (Methanobacterium thermoautotrophicum).